An 83-amino-acid chain; its full sequence is MAKRIMQGVVVSDKMDKTVVVLVERKVRHPLYGKIVRQSKKYKAHDEENQYRTGDMVMIQESRPLSKDKNWVVTERTAVAVEG.

This sequence belongs to the universal ribosomal protein uS17 family. As to quaternary structure, part of the 30S ribosomal subunit.

Its function is as follows. One of the primary rRNA binding proteins, it binds specifically to the 5'-end of 16S ribosomal RNA. The sequence is that of Small ribosomal subunit protein uS17 from Magnetococcus marinus (strain ATCC BAA-1437 / JCM 17883 / MC-1).